Consider the following 244-residue polypeptide: NAD(P)H-quinone oxidoreductase subunit K (244 aa).

[4Fe-4S] cluster-binding residues include cysteine 60, cysteine 61, cysteine 125, and cysteine 156. The disordered stretch occupies residues 213-244 (KSEKSIESSKLNPVEESSENIYETNSIDEVIK). Over residues 231–244 (ENIYETNSIDEVIK) the composition is skewed to polar residues.

The protein belongs to the complex I 20 kDa subunit family. In terms of assembly, NDH-1 can be composed of about 15 different subunits; different subcomplexes with different compositions have been identified which probably have different functions. [4Fe-4S] cluster is required as a cofactor.

It localises to the cellular thylakoid membrane. It catalyses the reaction a plastoquinone + NADH + (n+1) H(+)(in) = a plastoquinol + NAD(+) + n H(+)(out). The enzyme catalyses a plastoquinone + NADPH + (n+1) H(+)(in) = a plastoquinol + NADP(+) + n H(+)(out). Functionally, NDH-1 shuttles electrons from an unknown electron donor, via FMN and iron-sulfur (Fe-S) centers, to quinones in the respiratory and/or the photosynthetic chain. The immediate electron acceptor for the enzyme in this species is believed to be plastoquinone. Couples the redox reaction to proton translocation, and thus conserves the redox energy in a proton gradient. Cyanobacterial NDH-1 also plays a role in inorganic carbon-concentration. The sequence is that of NAD(P)H-quinone oxidoreductase subunit K from Prochlorococcus marinus subsp. pastoris (strain CCMP1986 / NIES-2087 / MED4).